A 176-amino-acid chain; its full sequence is Viral interleukin-10 homolog (176 aa).

The first 25 residues, 1-25 (MLSVMVSSSLVLIVFFLGASEEAKP), serve as a signal peptide directing secretion. 2 cysteine pairs are disulfide-bonded: Cys-38–Cys-128 and Cys-82–Cys-133. N-linked (GlcNAc...) asparagine; by host glycosylation is present at Asn-152.

It belongs to the IL-10 family. As to quaternary structure, homodimer; disulfide-linked.

The protein localises to the secreted. Its function is as follows. Functional viral IL-10 homolog. Can bind to the human IL-10 receptor and compete with human IL-10 for binding sites. Requires both subunits of the human IL-10 receptor complex to induce signal transduction events and biological activities. IL-10 signaling pathway has several immunosuppressive activities that are exploited by the virus. Inhibits TLR-induced type I interferon production in host plasmacytoid dendritic cells. This Homo sapiens (Human) protein is Viral interleukin-10 homolog (UL111A).